A 507-amino-acid polypeptide reads, in one-letter code: tRNA(Ile)-lysidine synthase (507 aa).

24 to 29 (SGGGDS) serves as a coordination point for ATP. The CMP/dCMP-type deaminase domain occupies 370–500 (PPEEAHMAEA…KLLRDFFARL (131 aa)). Histidine 420, cysteine 445, and cysteine 448 together coordinate Zn(2+).

It belongs to the tRNA(Ile)-lysidine synthase family.

It localises to the cytoplasm. The enzyme catalyses cytidine(34) in tRNA(Ile2) + L-lysine + ATP = lysidine(34) in tRNA(Ile2) + AMP + diphosphate + H(+). Its function is as follows. Ligates lysine onto the cytidine present at position 34 of the AUA codon-specific tRNA(Ile) that contains the anticodon CAU, in an ATP-dependent manner. Cytidine is converted to lysidine, thus changing the amino acid specificity of the tRNA from methionine to isoleucine. This chain is tRNA(Ile)-lysidine synthase (tilS), found in Thermus thermophilus (strain ATCC BAA-163 / DSM 7039 / HB27).